We begin with the raw amino-acid sequence, 1322 residues long: Structural polyprotein (1322 aa).

2 disordered regions span residues Phe-18–Val-41 and Ala-61–Val-128. Positions Ala-48–Lys-81 are host transcription inhibition. Positions Gly-73–Asn-86 are enriched in basic residues. Positions Pro-74 to Pro-120 match the Nuclear localization signal motif. Over residues Lys-101–Ala-113 the composition is skewed to basic and acidic residues. Positions Lys-101–Thr-135 are binding to the viral RNA. The tract at residues Pro-120–Ser-134 is ribosome-binding. The Peptidase S3 domain occupies Ser-134 to Trp-283. The active-site Charge relay system is His-160. The short motif at Phe-165–Phe-175 is the Nuclear export signal element. Asp-182 (charge relay system) is an active-site residue. The interval Met-203–Asn-213 is dimerization of the capsid protein. Catalysis depends on Ser-234, which acts as the Charge relay system. Residues Asp-240 to Lys-244 are dimerization of the capsid protein. Residues Thr-284–Asn-303 form a functions as an uncleaved signal peptide for the precursor of protein E3/E2 region. Cystine bridges form between Cys-298–Cys-307, Cys-382–Cys-488, Cys-385–Cys-390, Cys-455–Cys-469, and Cys-517–Cys-634. The Extracellular segment spans residues Ala-355–Tyr-735. A helical membrane pass occupies residues Ala-736–Cys-756. At Ala-757–Ala-792 the chain is on the cytoplasmic side. The segment at Val-761–Cys-785 is transient transmembrane before p62-6K protein processing. S-palmitoyl cysteine; by host attachment occurs at residues Cys-785 and Cys-786. Residues Asp-793–Lys-808 are Extracellular-facing. The chain crosses the membrane as a helical span at residues Val-809 to Leu-829. At Arg-830–Leu-834 the chain is on the cytoplasmic side. The helical transmembrane segment at Cys-835–Val-855 threads the bilayer. Residues Gln-856–Ala-1287 lie on the Extracellular side of the membrane. Intrachain disulfides connect Cys-910–Cys-985, Cys-923–Cys-965, Cys-924–Cys-967, Cys-929–Cys-949, Cys-1135–Cys-1147, Cys-1177–Cys-1253, Cys-1182–Cys-1257, and Cys-1204–Cys-1247. An E1 fusion peptide loop region spans residues Val-955–Thr-972. The helical transmembrane segment at Gly-1288–Val-1309 threads the bilayer. At Lys-1310–Ser-1322 the chain is on the cytoplasmic side. Cys-1312 carries the S-stearoyl cysteine; by host lipid modification.

As to quaternary structure, homodimer. Homomultimer. Interacts with host karyopherin KPNA4; this interaction allows the nuclear import of the viral capsid protein. Interacts with spike glycoprotein E2. Interacts with host IRAK1; the interaction leads to inhibition of IRAK1-dependent signaling. In terms of assembly, the precursor of protein E3/E2 and E1 form a heterodimer shortly after synthesis. Interacts with spike glycoprotein E2. The precursor of protein E3/E2 and E1 form a heterodimer shortly after synthesis. Processing of the precursor of protein E3/E2 into E2 and E3 results in a heterodimer of the spike glycoproteins E2 and E1. Spike at virion surface are constituted of three E2-E1 heterodimers. After target cell attachment and endocytosis, E1 change conformation to form homotrimers. Interacts with 6K protein. As to quaternary structure, interacts with spike glycoprotein E1. Processing of the precursor of protein E3/E2 into E2 and E3 results in a heterodimer of the spike glycoproteins E2 and E1. Spike at virion surface are constituted of a trimer of E2-E1 heterodimers. Interacts with 6K protein. In terms of assembly, oligomer. Interacts with spike glycoprotein E1. Interacts with spike glycoprotein E2. Post-translationally, structural polyprotein: Specific enzymatic cleavages in vivo yield mature proteins. Capsid protein is auto-cleaved during polyprotein translation, unmasking a signal peptide at the N-terminus of the precursor of E3/E2. The remaining polyprotein is then targeted to the host endoplasmic reticulum, where host signal peptidase cleaves it into pE2, 6K and E1 proteins. pE2 is further processed to mature E3 and E2 by host furin in trans-Golgi vesicle. Palmitoylated via thioester bonds. These palmitoylations may induce disruption of the C-terminus transmembrane. This would result in the reorientation of E2 C-terminus from lumenal to cytoplasmic side. In terms of processing, N-glycosylated. Post-translationally, palmitoylated via thioester bonds.

Its subcellular location is the virion. It localises to the host cytoplasm. The protein localises to the host cell membrane. It is found in the host nucleus. The protein resides in the virion membrane. Its subcellular location is the host Golgi apparatus. It localises to the host trans-Golgi network. The protein localises to the host endoplasmic reticulum. It carries out the reaction Autocatalytic release of the core protein from the N-terminus of the togavirus structural polyprotein by hydrolysis of a -Trp-|-Ser- bond.. Functionally, forms an icosahedral capsid with a T=4 symmetry composed of 240 copies of the capsid protein surrounded by a lipid membrane through which penetrate 80 spikes composed of trimers of E1-E2 heterodimers. The capsid protein binds to the viral RNA genome at a site adjacent to a ribosome binding site for viral genome translation following genome release. Possesses a protease activity that results in its autocatalytic cleavage from the nascent structural protein. Following its self-cleavage, the capsid protein transiently associates with ribosomes, and within several minutes the protein binds to viral RNA and rapidly assembles into icosahedric core particles. The resulting nucleocapsid eventually associates with the cytoplasmic domain of the spike glycoprotein E2 at the cell membrane, leading to budding and formation of mature virions. In case of infection, new virions attach to target cells and after clathrin-mediated endocytosis their membrane fuses with the host endosomal membrane. This leads to the release of the nucleocapsid into the cytoplasm, followed by an uncoating event necessary for the genomic RNA to become accessible. The uncoating might be triggered by the interaction of capsid proteins with ribosomes. Binding of ribosomes would release the genomic RNA since the same region is genomic RNA-binding and ribosome-binding. Specifically inhibits interleukin-1 receptor-associated kinase 1/IRAK1-dependent signaling during viral entry, representing a means by which the alphaviruses may evade innate immune detection and activation prior to viral gene expression. Provides the signal sequence for the translocation of the precursor of protein E3/E2 to the host endoplasmic reticulum. Furin-cleaved E3 remains associated with spike glycoprotein E1 and mediates pH protection of the latter during the transport via the secretory pathway. After virion release from the host cell, the assembly protein E3 is gradually released in the extracellular space. Its function is as follows. Plays a role in viral attachment to target host cell, by binding to the cell receptor. Synthesized as a p62 precursor which is processed by furin at the cell membrane just before virion budding, giving rise to E2-E1 heterodimer. The p62-E1 heterodimer is stable, whereas E2-E1 is unstable and dissociate at low pH. p62 is processed at the last step, presumably to avoid E1 fusion activation before its final export to cell surface. E2 C-terminus contains a transitory transmembrane that would be disrupted by palmitoylation, resulting in reorientation of the C-terminal tail from lumenal to cytoplasmic side. This step is critical since E2 C-terminus is involved in budding by interacting with capsid proteins. This release of E2 C-terminus in cytoplasm occurs lately in protein export, and precludes premature assembly of particles at the endoplasmic reticulum membrane. In terms of biological role, acts as a viroporin that participates in virus glycoprotein processing and transport to the plasma membrane, cell permeabilization and budding of viral particles. Disrupts the calcium homeostasis of the cell, probably at the endoplasmic reticulum level. This leads to cytoplasmic calcium elevation. Because of its lipophilic properties, the 6K protein is postulated to influence the selection of lipids that interact with the transmembrane domains of the glycoproteins, which, in turn, affects the deformability of the bilayer required for the extreme curvature that occurs as budding proceeds. Present in low amount in virions, about 3% compared to viral glycoproteins. Functionally, class II viral fusion protein. Fusion activity is inactive as long as E1 is bound to E2 in mature virion. After virus attachment to target cell and endocytosis, acidification of the endosome induce dissociation of E1/E2 heterodimer and concomitant trimerization of the E1 subunits. This E1 trimer is fusion active, and promotes release of viral nucleocapsid in cytoplasm after endosome and viral membrane fusion. Efficient fusion requires the presence of cholesterol and sphingolipid in the target membrane. In Oncorhynchus mykiss (Rainbow trout), this protein is Structural polyprotein.